Reading from the N-terminus, the 356-residue chain is Cytochrome c oxidase subunit 2 (356 aa).

The signal sequence occupies residues 1–20; it reads MVKHWRLILLLALVPLLLSG. Cysteine 21 carries N-palmitoyl cysteine lipidation. Cysteine 21 carries S-diacylglycerol cysteine lipidation. The Extracellular segment spans residues 21-47; the sequence is CGKPFLSTLKPAGEVADKQYDLTVLST. Positions 21-257 are cytochrome c oxidase subunit II; the sequence is CGKPFLSTLK…KNYKSTAESD (237 aa). The chain crosses the membrane as a helical span at residues 48 to 66; that stretch reads LIMVVVVAVVSVIFFYVIV. The Cytoplasmic portion of the chain corresponds to 67–87; that stretch reads RFRRSRVGENTIPKQVEGNKF. Residues 88–106 traverse the membrane as a helical segment; the sequence is LEITWTVIPILLLIILVIP. Topologically, residues 107 to 356 are extracellular; the sequence is VVLYTLELAD…YLKGLKAESK (250 aa). Residues histidine 176, cysteine 217, cysteine 221, and histidine 225 each coordinate Cu cation. A Cytochrome c domain is found at 258–356; the sequence is LAKQGEELFK…YLKGLKAESK (99 aa). The heme c site is built by cysteine 271, cysteine 274, histidine 275, and methionine 329.

This sequence belongs to the cytochrome c oxidase subunit 2 family. The cofactor is Cu cation. Requires heme c as cofactor.

The protein localises to the cell membrane. The catalysed reaction is 4 Fe(II)-[cytochrome c] + O2 + 8 H(+)(in) = 4 Fe(III)-[cytochrome c] + 2 H2O + 4 H(+)(out). In terms of biological role, subunits I and II form the functional core of the enzyme complex. Electrons originating in cytochrome c are transferred via heme a and Cu(A) to the binuclear center formed by heme a3 and Cu(B). The protein is Cytochrome c oxidase subunit 2 (ctaC) of Bacillus subtilis (strain 168).